The primary structure comprises 927 residues: Protein LONGIFOLIA 1 (927 aa).

Disordered regions lie at residues 41–198, 210–257, 460–588, and 605–626; these read TGDE…EGRR, YDER…GHRR, AQKV…SDSN, and YERN…DLGM. Residues 86–114 show a composition bias toward low complexity; it reads SSESSSRLSFSSSPCSSSFSSADISTTAS. The segment covering 115–125 has biased composition (polar residues); the sequence is QFEQPGLSNGE. Basic and acidic residues predominate over residues 146–165; sequence DIRELVRSSIHKETRTRDEE. The segment covering 182–193 has biased composition (polar residues); that stretch reads KESSPSRNSNEW. Residues 210–226 are compositionally biased toward basic and acidic residues; sequence YDERETRKTGAKLKETP. Low complexity predominate over residues 232 to 245; sequence SRSNSFRSARSSCS. Polar residues-rich tracts occupy residues 483 to 500 and 538 to 553; these read QTES…QSKS and NKNQ…TESA. 2 stretches are compositionally biased toward basic and acidic residues: residues 569-584 and 605-616; these read SEDR…RSLR and YERNSDITEQHT.

Interacts (via C-terminus) with TON1A and TON1B. Expressed in roots, petioles, leaf blades and floral organs.

The protein resides in the nucleus. Its function is as follows. In association with LNG2, regulates leaf morphology by promoting longitudinal polar cell elongation independently of ROT3. This is Protein LONGIFOLIA 1 (LNG1) from Arabidopsis thaliana (Mouse-ear cress).